The sequence spans 627 residues: 1-deoxy-D-xylulose-5-phosphate synthase (627 aa).

Thiamine diphosphate is bound by residues H80 and 121 to 123 (GHS). D152 provides a ligand contact to Mg(2+). Thiamine diphosphate is bound by residues 153–154 (GA), N181, Y288, and E370. N181 lines the Mg(2+) pocket.

This sequence belongs to the transketolase family. DXPS subfamily. Homodimer. The cofactor is Mg(2+). Requires thiamine diphosphate as cofactor.

The catalysed reaction is D-glyceraldehyde 3-phosphate + pyruvate + H(+) = 1-deoxy-D-xylulose 5-phosphate + CO2. The protein operates within metabolic intermediate biosynthesis; 1-deoxy-D-xylulose 5-phosphate biosynthesis; 1-deoxy-D-xylulose 5-phosphate from D-glyceraldehyde 3-phosphate and pyruvate: step 1/1. Functionally, catalyzes the acyloin condensation reaction between C atoms 2 and 3 of pyruvate and glyceraldehyde 3-phosphate to yield 1-deoxy-D-xylulose-5-phosphate (DXP). The sequence is that of 1-deoxy-D-xylulose-5-phosphate synthase from Vibrio atlanticus (strain LGP32) (Vibrio splendidus (strain Mel32)).